The following is a 512-amino-acid chain: Norfluorocurarine oxidase (512 aa).

Residues 3-23 traverse the membrane as a helical segment; it reads LLLNPSLFSLLPLLLFIIFLF. Cys453 is a binding site for heme.

Belongs to the cytochrome P450 family. Heme is required as a cofactor.

Its subcellular location is the membrane. The catalysed reaction is norfluorocurarine + reduced [NADPH--hemoprotein reductase] + O2 = 18-hydroxynorfluorocurarine + oxidized [NADPH--hemoprotein reductase] + H2O + H(+). It participates in alkaloid biosynthesis. Monooxygenase involved in the biosynthesis of curare monoterpene indole alkaloids (MIAs), natural products such as diaboline, a pharmacologically active compound used to regulate blood pressure. Curare alkaloids act as animal glycine receptor antagonists. Catalyzes the conversion of norfluorocurarine to 18-OH norfluorocurarine. This Strychnos sp protein is Norfluorocurarine oxidase.